We begin with the raw amino-acid sequence, 953 residues long: Atromentin synthetase invA5 (953 aa).

The tract at residues 37–460 is adenylation (A) domain; the sequence is SRAVSQYPDH…SGRIKDTVIV (424 aa). The Carrier domain maps to 592–670; that stretch reads APSTETEKTL…SLAKYVDSLI (79 aa). The interval 597-667 is thiolation and peptide carrier (T) domain; that stretch reads TEKTLAGIYA…VISSLAKYVD (71 aa). Residue Ser-629 is modified to O-(pantetheine 4'-phosphoryl)serine. A thioesterase (TE) domain region spans residues 693–795; that stretch reads PIFMVHPGVG…FTGLINIPPN (103 aa).

It belongs to the ATP-dependent AMP-binding enzyme family.

Its pathway is secondary metabolite biosynthesis. Its function is as follows. An L-tyrosine:2-oxoglutarate aminotransferase (probably invD) and atromentin synthetase invA5 catalyze consecutive steps to turn over L-tyrosine into atromentin, which represents the generic precursor molecule for the entire terphenylquinone and pulvinic acid family of pigments, which are widely distributed secondary metabolites in homobasidiomycetes. The first step catalyzed by the aminotransferase converts L-tyrosine in to 4-hydroxyphenylpyruvate (4-HPP). Adenylation of two 4-HPP monomers by the invA5 adenylation (A) domain, covalent tethering of the monomers as a thioester and oxoester onto the invA5 thiolation (T) and thioesterase (TE) domains, respectively, and symmetric C-C-bond formation between two monomers catalyzed by the invA5 TE domain leads to atromentin. The sequence is that of Atromentin synthetase invA5 (invA5) from Paxillus involutus (Naked brimcap).